A 1315-amino-acid chain; its full sequence is Serine-aspartate repeat-containing protein D (1315 aa).

Positions 1 to 35 are cleaved as a signal peptide; that stretch reads MLNRENKTAITRKGMVSNRLNKFSIRKYTVGTASI. A YSIRK-G/S signaling motif motif is present at residues 23–34; it reads FSIRKYTVGTAS. The segment at 36–568 is ligand binding A region; the sequence is LVGTTLIFGL…NNQSGGAGQE (533 aa). Residues 54-185 form a disordered region; sequence ESTNKELNEA…NKKVDAKTES (132 aa). Composition is skewed to polar residues over residues 62–71 and 94–108; these read EATTSASDNQ and EMVS…SNGN. The segment covering 130–145 has biased composition (basic and acidic residues); that stretch reads KSDEQASPKSTNEDLN. Composition is skewed to polar residues over residues 146–155 and 163–173; these read TKQTISNQEA and NKSVVNVQPTN. Residues 174-183 are compositionally biased toward basic and acidic residues; it reads EENKKVDAKT. CNA-B domains follow at residues 569–680, 681–791, 792–901, 902–1012, and 1013–1123; these read VYKI…IYKP, KYNL…YKTP, KYNL…FYKP, TYNL…YKTP, and KYSL…EEET. Disordered stretches follow at residues 857 to 883, 972 to 992, and 1078 to 1291; these read ETPS…TSTT, YTPT…GLTT, and EKPA…SNNA. 2 stretches are compositionally biased toward polar residues: residues 860–869 and 972–981; these read SGYTPTQVGS and YTPTSVTSGN. 4 stretches are compositionally biased toward acidic residues: residues 1091-1101, 1118-1134, 1142-1164, and 1172-1254; these read TEDDKDADGGE, YYEE…DSDS, and SDSD…DSDS. Residues 1278–1282 carry the LPXTG sorting signal motif; it reads LPETG. Thr-1281 carries the pentaglycyl murein peptidoglycan amidated threonine modification. Residues 1282-1315 constitute a propeptide, removed by sortase; that stretch reads GNENSGSNNATLFGGLFAALGSLLLFGRRKKQNK.

The protein belongs to the serine-aspartate repeat-containing protein (SDr) family. Interacts with host DSG1; this interaction increases S.aureus adherence to keratinocytes. In terms of processing, anchored to the cell wall by sortase A.

Its subcellular location is the secreted. The protein localises to the cell wall. Its function is as follows. Cell surface-associated calcium-binding protein which plays an important role in adhesion and pathogenesis. Mediates interactions with components of the extracellular matrix such as host DSG1 to promote bacterial adhesion to host cells. Contributes to the resistance to killing by innate immune components such as neutrophils present in blood and thus attenuates bacterial clearance. In Staphylococcus aureus (strain Newman), this protein is Serine-aspartate repeat-containing protein D (sdrD).